The sequence spans 358 residues: Carbamoyl phosphate synthase small chain (358 aa).

Positions 1–168 (MKRLLLLEDG…TKLAYASPGV (168 aa)) are CPSase. L-glutamine contacts are provided by Ser-45, Gly-219, and Gly-221. Residues 171-357 (NIVLVDFGLK…INMIDDFQQK (187 aa)) form the Glutamine amidotransferase type-1 domain. Cys-246 acts as the Nucleophile in catalysis. Residues Met-247, Gln-250, Asn-288, Gly-290, and Tyr-291 each coordinate L-glutamine. Residues His-330 and Asp-332 contribute to the active site.

Belongs to the CarA family. As to quaternary structure, composed of two chains; the small (or glutamine) chain promotes the hydrolysis of glutamine to ammonia, which is used by the large (or ammonia) chain to synthesize carbamoyl phosphate. Tetramer of heterodimers (alpha,beta)4.

The enzyme catalyses hydrogencarbonate + L-glutamine + 2 ATP + H2O = carbamoyl phosphate + L-glutamate + 2 ADP + phosphate + 2 H(+). It carries out the reaction L-glutamine + H2O = L-glutamate + NH4(+). It participates in amino-acid biosynthesis; L-arginine biosynthesis; carbamoyl phosphate from bicarbonate: step 1/1. It functions in the pathway pyrimidine metabolism; UMP biosynthesis via de novo pathway; (S)-dihydroorotate from bicarbonate: step 1/3. Small subunit of the glutamine-dependent carbamoyl phosphate synthetase (CPSase). CPSase catalyzes the formation of carbamoyl phosphate from the ammonia moiety of glutamine, carbonate, and phosphate donated by ATP, constituting the first step of 2 biosynthetic pathways, one leading to arginine and/or urea and the other to pyrimidine nucleotides. The small subunit (glutamine amidotransferase) binds and cleaves glutamine to supply the large subunit with the substrate ammonia. The chain is Carbamoyl phosphate synthase small chain from Streptococcus agalactiae serotype III (strain NEM316).